A 236-amino-acid chain; its full sequence is uncharacterized protein (236 aa).

Residues 1 to 73 form a disordered region; that stretch reads MEPGGSENAA…GGGWGWGNTQ (73 aa).

This is an uncharacterized protein from Homo sapiens (Human).